We begin with the raw amino-acid sequence, 390 residues long: Succinate--CoA ligase [ADP-forming] subunit beta (390 aa).

The ATP-grasp domain maps to 9–244 (KSLFQQYGIP…ISQEDVREAK (236 aa)). 4 residues coordinate ATP: K46, E99, L102, and E107. The Mg(2+) site is built by N199 and D213. Residues N264 and 321–323 (GIV) contribute to the substrate site.

This sequence belongs to the succinate/malate CoA ligase beta subunit family. As to quaternary structure, heterotetramer of two alpha and two beta subunits. It depends on Mg(2+) as a cofactor.

It carries out the reaction succinate + ATP + CoA = succinyl-CoA + ADP + phosphate. The enzyme catalyses GTP + succinate + CoA = succinyl-CoA + GDP + phosphate. Its pathway is carbohydrate metabolism; tricarboxylic acid cycle; succinate from succinyl-CoA (ligase route): step 1/1. Succinyl-CoA synthetase functions in the citric acid cycle (TCA), coupling the hydrolysis of succinyl-CoA to the synthesis of either ATP or GTP and thus represents the only step of substrate-level phosphorylation in the TCA. The beta subunit provides nucleotide specificity of the enzyme and binds the substrate succinate, while the binding sites for coenzyme A and phosphate are found in the alpha subunit. The sequence is that of Succinate--CoA ligase [ADP-forming] subunit beta from Hydrogenovibrio crunogenus (strain DSM 25203 / XCL-2) (Thiomicrospira crunogena).